Consider the following 247-residue polypeptide: MVLCCVFLLFLTGSFAQDVGTIVTSDLFNEMLKNRNDDRCPAKGFYTYDAFIAAANSFPGFGTTGDDTARKKEIAAFFGQTSHETTGGSLSADGPFAGGYCFVREGNQMGSGFYGRGPIQLTGQSNYDLAGQAIGQDLVNNPDLVATDATVSFKTAIWFWMTAQGNKPSCHDVITGQWTPSAADASANRQPGYGVITNIINGGIECGKGQNPQVEDRIGFYRRYCTILNVAPGDNLDCYDQRNFAEA.

A signal peptide spans 1–16; it reads MVLCCVFLLFLTGSFA. The active-site Proton donor is Glu84. Cys206 and Cys238 are disulfide-bonded.

Belongs to the glycosyl hydrolase 19 family. Chitinase class II subfamily.

Its subcellular location is the secreted. It localises to the extracellular space. The enzyme catalyses Random endo-hydrolysis of N-acetyl-beta-D-glucosaminide (1-&gt;4)-beta-linkages in chitin and chitodextrins.. In terms of biological role, defense against chitin-containing fungal pathogens. This chain is Acidic 27 kDa endochitinase (CHI17), found in Solanum lycopersicum (Tomato).